A 346-amino-acid chain; its full sequence is Lipooligosaccharide heptosyltransferase 2 (346 aa).

Belongs to the glycosyltransferase 9 family.

It carries out the reaction an L-alpha-D-Hep-(1-&gt;5)-[alpha-Kdo-(2-&gt;4)]-alpha-Kdo-(2-&gt;6)-lipid A + ADP-L-glycero-beta-D-manno-heptose = an L-alpha-D-Hep-(1-&gt;3)-L-alpha-D-Hep-(1-&gt;5)-[alpha-Kdo-(2-&gt;4)]-alpha-Kdo-(2-&gt;6)-lipid A + ADP + H(+). Its pathway is bacterial outer membrane biogenesis; LOS core biosynthesis. Glycosyltransferase involved in the biosynthesis of the core oligosaccharide region of lipooligosaccharide (LOS). Catalyzes the addition of a heptose unit to the heptosyl-Kdo2-lipid A module. This is Lipooligosaccharide heptosyltransferase 2 (waaF) from Haemophilus influenzae (strain ATCC 51907 / DSM 11121 / KW20 / Rd).